A 452-amino-acid chain; its full sequence is tRNA modification GTPase MnmE (452 aa).

The (6S)-5-formyl-5,6,7,8-tetrahydrofolate site is built by Arg-21, Glu-78, and Lys-118. The 162-residue stretch at 214-375 (GMKVVIAGRP…LREHLKQAMG (162 aa)) folds into the TrmE-type G domain. Asn-224 provides a ligand contact to K(+). GTP is bound by residues 224–229 (NAGKSS), 243–249 (TDIAGTT), and 268–271 (DTAG). Ser-228 lines the Mg(2+) pocket. Residues Thr-243, Ile-245, and Thr-248 each coordinate K(+). Residue Thr-249 participates in Mg(2+) binding. Residue Lys-452 participates in (6S)-5-formyl-5,6,7,8-tetrahydrofolate binding.

This sequence belongs to the TRAFAC class TrmE-Era-EngA-EngB-Septin-like GTPase superfamily. TrmE GTPase family. In terms of assembly, homodimer. Heterotetramer of two MnmE and two MnmG subunits. The cofactor is K(+).

Its subcellular location is the cytoplasm. Functionally, exhibits a very high intrinsic GTPase hydrolysis rate. Involved in the addition of a carboxymethylaminomethyl (cmnm) group at the wobble position (U34) of certain tRNAs, forming tRNA-cmnm(5)s(2)U34. This is tRNA modification GTPase MnmE from Haemophilus influenzae (strain PittGG).